The following is a 469-amino-acid chain: Asparagine--tRNA ligase (469 aa).

It belongs to the class-II aminoacyl-tRNA synthetase family. In terms of assembly, homodimer.

Its subcellular location is the cytoplasm. It catalyses the reaction tRNA(Asn) + L-asparagine + ATP = L-asparaginyl-tRNA(Asn) + AMP + diphosphate + H(+). This Porphyromonas gingivalis (strain ATCC 33277 / DSM 20709 / CIP 103683 / JCM 12257 / NCTC 11834 / 2561) protein is Asparagine--tRNA ligase.